Here is a 1364-residue protein sequence, read N- to C-terminus: Trifunctional purine biosynthetic protein adenosine-3 (1364 aa).

Positions 114 to 321 (KDFMLRHGIP…LFEVMQACCS (208 aa)) constitute an ATP-grasp domain. Residue 140–202 (IRSAPYQALV…EELLEGEEIS (63 aa)) participates in ATP binding. The Mn(2+) site is built by E291 and N293. The tract at residues 435–1154 (AIATAPGLSY…ARTQRMLSQP (720 aa)) is AIRS. The segment at 1155–1364 (RKRVAVLISG…EAPKDIKDSQ (210 aa)) is GART. 1166-1168 (GSN) is a N(1)-(5-phospho-beta-D-ribosyl)glycinamide binding site. Residues R1221, 1246–1249 (MRIL), and N1263 each bind (6R)-10-formyltetrahydrofolate. Catalysis depends on H1265, which acts as the Proton donor. 1297–1301 (DEGVD) lines the (6R)-10-formyltetrahydrofolate pocket. Residue 1327–1330 (HYAE) participates in N(1)-(5-phospho-beta-D-ribosyl)glycinamide binding.

This sequence in the N-terminal section; belongs to the GARS family. It in the central section; belongs to the AIR synthase family. The protein in the C-terminal section; belongs to the GART family.

The catalysed reaction is 5-phospho-beta-D-ribosylamine + glycine + ATP = N(1)-(5-phospho-beta-D-ribosyl)glycinamide + ADP + phosphate + H(+). The enzyme catalyses 2-formamido-N(1)-(5-O-phospho-beta-D-ribosyl)acetamidine + ATP = 5-amino-1-(5-phospho-beta-D-ribosyl)imidazole + ADP + phosphate + H(+). It catalyses the reaction N(1)-(5-phospho-beta-D-ribosyl)glycinamide + (6R)-10-formyltetrahydrofolate = N(2)-formyl-N(1)-(5-phospho-beta-D-ribosyl)glycinamide + (6S)-5,6,7,8-tetrahydrofolate + H(+). Its pathway is purine metabolism; IMP biosynthesis via de novo pathway; 5-amino-1-(5-phospho-D-ribosyl)imidazole from N(2)-formyl-N(1)-(5-phospho-D-ribosyl)glycinamide: step 2/2. The protein operates within purine metabolism; IMP biosynthesis via de novo pathway; N(1)-(5-phospho-D-ribosyl)glycinamide from 5-phospho-alpha-D-ribose 1-diphosphate: step 2/2. It functions in the pathway purine metabolism; IMP biosynthesis via de novo pathway; N(2)-formyl-N(1)-(5-phospho-D-ribosyl)glycinamide from N(1)-(5-phospho-D-ribosyl)glycinamide (10-formyl THF route): step 1/1. Its function is as follows. Trifunctional enzyme required for de novo purine biosynthesis. This is Trifunctional purine biosynthetic protein adenosine-3 (ade3) from Drosophila pseudoobscura pseudoobscura (Fruit fly).